A 396-amino-acid polypeptide reads, in one-letter code: Tryptophan synthase beta chain (396 aa).

N6-(pyridoxal phosphate)lysine is present on Lys-86.

Belongs to the TrpB family. Tetramer of two alpha and two beta chains. Pyridoxal 5'-phosphate is required as a cofactor.

The catalysed reaction is (1S,2R)-1-C-(indol-3-yl)glycerol 3-phosphate + L-serine = D-glyceraldehyde 3-phosphate + L-tryptophan + H2O. Its pathway is amino-acid biosynthesis; L-tryptophan biosynthesis; L-tryptophan from chorismate: step 5/5. Its function is as follows. The beta subunit is responsible for the synthesis of L-tryptophan from indole and L-serine. In Francisella tularensis subsp. tularensis (strain FSC 198), this protein is Tryptophan synthase beta chain.